The primary structure comprises 78 residues: Structural DNA-binding protein p10 (78 aa).

Residues 1–25 (MPTKAGTKSTANKKTTKGSSKSGSA) show a composition bias toward low complexity. Residues 1–41 (MPTKAGTKSTANKKTTKGSSKSGSARGHTGKTHAPPSMHSG) are disordered.

This sequence belongs to the asfivirus P10 family.

It is found in the virion. Functionally, may play a role in genome packaging through direct interaction with viral DNA. Binds to ssDNA and dsDNA with the same apparent affinity in vitro. The sequence is that of Structural DNA-binding protein p10 from African swine fever virus (isolate Warthog/Namibia/Wart80/1980) (ASFV).